A 320-amino-acid chain; its full sequence is Cytochrome f (320 aa).

A signal peptide spans 1–35; the sequence is MQTRNTFSWIKEEITRSISVSLMIYIITGASISNA. Positions 36, 56, 59, and 60 each coordinate heme. The chain crosses the membrane as a helical span at residues 286-306; it reads VQGLLFFLASIVFAQIFLVLK.

Belongs to the cytochrome f family. The 4 large subunits of the cytochrome b6-f complex are cytochrome b6, subunit IV (17 kDa polypeptide, petD), cytochrome f and the Rieske protein, while the 4 small subunits are PetG, PetL, PetM and PetN. The complex functions as a dimer. It depends on heme as a cofactor.

The protein resides in the plastid. It is found in the chloroplast thylakoid membrane. In terms of biological role, component of the cytochrome b6-f complex, which mediates electron transfer between photosystem II (PSII) and photosystem I (PSI), cyclic electron flow around PSI, and state transitions. In Gossypium barbadense (Sea Island cotton), this protein is Cytochrome f.